The following is a 938-amino-acid chain: Isoleucine--tRNA ligase (938 aa).

Residues 58–68 carry the 'HIGH' region motif; that stretch reads PYANGSIHIGH. Glu-561 serves as a coordination point for L-isoleucyl-5'-AMP. The 'KMSKS' region motif lies at 602 to 606; it reads KMSKS. Residue Lys-605 coordinates ATP. Residues Cys-901, Cys-904, Cys-921, and Cys-924 each coordinate Zn(2+).

This sequence belongs to the class-I aminoacyl-tRNA synthetase family. IleS type 1 subfamily. In terms of assembly, monomer. The cofactor is Zn(2+).

It is found in the cytoplasm. The enzyme catalyses tRNA(Ile) + L-isoleucine + ATP = L-isoleucyl-tRNA(Ile) + AMP + diphosphate. In terms of biological role, catalyzes the attachment of isoleucine to tRNA(Ile). As IleRS can inadvertently accommodate and process structurally similar amino acids such as valine, to avoid such errors it has two additional distinct tRNA(Ile)-dependent editing activities. One activity is designated as 'pretransfer' editing and involves the hydrolysis of activated Val-AMP. The other activity is designated 'posttransfer' editing and involves deacylation of mischarged Val-tRNA(Ile). This Baumannia cicadellinicola subsp. Homalodisca coagulata protein is Isoleucine--tRNA ligase.